A 359-amino-acid chain; its full sequence is Fructose-bisphosphate aldolase class 2 (359 aa).

Ser-50 lines the D-glyceraldehyde 3-phosphate pocket. The active-site Proton donor is Asp-83. 4 residues coordinate Zn(2+): His-84, Asp-105, Glu-142, and His-198. Gly-199 provides a ligand contact to dihydroxyacetone phosphate. His-232 serves as a coordination point for Zn(2+). Dihydroxyacetone phosphate is bound by residues Gly-233–Ser-235 and Asn-275–Thr-278.

This sequence belongs to the class II fructose-bisphosphate aldolase family. Zn(2+) serves as cofactor.

It carries out the reaction beta-D-fructose 1,6-bisphosphate = D-glyceraldehyde 3-phosphate + dihydroxyacetone phosphate. Its pathway is carbohydrate degradation; glycolysis; D-glyceraldehyde 3-phosphate and glycerone phosphate from D-glucose: step 4/4. Its function is as follows. Catalyzes the aldol condensation of dihydroxyacetone phosphate (DHAP or glycerone-phosphate) with glyceraldehyde 3-phosphate (G3P) to form fructose 1,6-bisphosphate (FBP) in gluconeogenesis and the reverse reaction in glycolysis. The polypeptide is Fructose-bisphosphate aldolase class 2 (fbaA) (Synechocystis sp. (strain ATCC 27184 / PCC 6803 / Kazusa)).